A 216-amino-acid polypeptide reads, in one-letter code: Probable GTP-binding protein EngB (216 aa).

One can recognise an EngB-type G domain in the interval 43–216 (DRIEVCFAGR…TLRSIIAHLD (174 aa)). Residues 51–58 (GRSNVGKS), 78–82 (GRTQE), 96–99 (DLPG), 163–166 (TKAD), and 197–199 (TSS) contribute to the GTP site. Ser-58 and Thr-80 together coordinate Mg(2+).

The protein belongs to the TRAFAC class TrmE-Era-EngA-EngB-Septin-like GTPase superfamily. EngB GTPase family. Mg(2+) is required as a cofactor.

Its function is as follows. Necessary for normal cell division and for the maintenance of normal septation. This chain is Probable GTP-binding protein EngB, found in Ruegeria sp. (strain TM1040) (Silicibacter sp.).